The sequence spans 396 residues: Septu protein PtuA (396 aa).

Functionally, component of antiviral defense system Septu type I, composed of PtuA and PtuB. Expression of Septu type I in B.subtilis (strain BEST7003) confers resistance to phages SBSphiC and SBSphiJ. May be an ATPase. This chain is Septu protein PtuA, found in Bacillus thuringiensis.